We begin with the raw amino-acid sequence, 440 residues long: Phosphatidylglycerol--prolipoprotein diacylglyceryl transferase (440 aa).

A run of 4 helical transmembrane segments spans residues 21 to 41, 53 to 73, 96 to 116, and 122 to 142; these read VPIR…LLIG, GVIY…GRLY, IWDG…GAWI, and GIPL…AQAI. An a 1,2-diacyl-sn-glycero-3-phospho-(1'-sn-glycerol)-binding site is contributed by Arg-144. The next 2 helical transmembrane spans lie at 189–209 and 256–276; these read VALV…LIFV and INSF…MAAP. The disordered stretch occupies residues 280–440; that stretch reads EDPESLRGNQ…ARLRDRLSGR (161 aa). A compositionally biased stretch (low complexity) spans 299–330; sequence EPATVAATTEAATEGVAAPADGAEAAGADATA. Basic and acidic residues predominate over residues 332-346; it reads RPEESAEPDVEKPES. Acidic residues predominate over residues 347 to 417; that stretch reads EETEAEAAEE…PEQPVAEEPE (71 aa). Positions 424 to 440 are enriched in basic and acidic residues; it reads ETKRRWGARLRDRLSGR.

It belongs to the Lgt family.

Its subcellular location is the cell membrane. The enzyme catalyses L-cysteinyl-[prolipoprotein] + a 1,2-diacyl-sn-glycero-3-phospho-(1'-sn-glycerol) = an S-1,2-diacyl-sn-glyceryl-L-cysteinyl-[prolipoprotein] + sn-glycerol 1-phosphate + H(+). The protein operates within protein modification; lipoprotein biosynthesis (diacylglyceryl transfer). Catalyzes the transfer of the diacylglyceryl group from phosphatidylglycerol to the sulfhydryl group of the N-terminal cysteine of a prolipoprotein, the first step in the formation of mature lipoproteins. In Mycobacterium avium (strain 104), this protein is Phosphatidylglycerol--prolipoprotein diacylglyceryl transferase.